The primary structure comprises 315 residues: Homoserine kinase (315 aa).

Residue 96-106 coordinates ATP; that stretch reads PHSRGLGSSAA.

This sequence belongs to the GHMP kinase family. Homoserine kinase subfamily.

It localises to the cytoplasm. The catalysed reaction is L-homoserine + ATP = O-phospho-L-homoserine + ADP + H(+). Its pathway is amino-acid biosynthesis; L-threonine biosynthesis; L-threonine from L-aspartate: step 4/5. Functionally, catalyzes the ATP-dependent phosphorylation of L-homoserine to L-homoserine phosphate. This chain is Homoserine kinase, found in Mycolicibacterium paratuberculosis (strain ATCC BAA-968 / K-10) (Mycobacterium paratuberculosis).